The sequence spans 213 residues: Pyrrolidone-carboxylate peptidase (213 aa).

Active-site residues include Glu-78, Cys-141, and His-165.

It belongs to the peptidase C15 family. As to quaternary structure, homotetramer.

The protein resides in the cytoplasm. The catalysed reaction is Release of an N-terminal pyroglutamyl group from a polypeptide, the second amino acid generally not being Pro.. Functionally, removes 5-oxoproline from various penultimate amino acid residues except L-proline. This chain is Pyrrolidone-carboxylate peptidase, found in Clostridium botulinum (strain Alaska E43 / Type E3).